We begin with the raw amino-acid sequence, 430 residues long: Serine--tRNA ligase (430 aa).

The span at 45–58 shows a compositional bias: polar residues; that stretch reads ENLQAERNSRSKSI. The segment at 45 to 65 is disordered; that stretch reads ENLQAERNSRSKSIGQAKARG. 237 to 239 is a binding site for L-serine; sequence TSE. Residue 268–270 participates in ATP binding; it reads RSE. Residue Glu291 participates in L-serine binding. 355 to 358 lines the ATP pocket; it reads EISS. Position 391 (Ser391) interacts with L-serine.

It belongs to the class-II aminoacyl-tRNA synthetase family. Type-1 seryl-tRNA synthetase subfamily. As to quaternary structure, homodimer. The tRNA molecule binds across the dimer.

The protein localises to the cytoplasm. It catalyses the reaction tRNA(Ser) + L-serine + ATP = L-seryl-tRNA(Ser) + AMP + diphosphate + H(+). The catalysed reaction is tRNA(Sec) + L-serine + ATP = L-seryl-tRNA(Sec) + AMP + diphosphate + H(+). Its pathway is aminoacyl-tRNA biosynthesis; selenocysteinyl-tRNA(Sec) biosynthesis; L-seryl-tRNA(Sec) from L-serine and tRNA(Sec): step 1/1. Its function is as follows. Catalyzes the attachment of serine to tRNA(Ser). Is also able to aminoacylate tRNA(Sec) with serine, to form the misacylated tRNA L-seryl-tRNA(Sec), which will be further converted into selenocysteinyl-tRNA(Sec). The protein is Serine--tRNA ligase of Erwinia tasmaniensis (strain DSM 17950 / CFBP 7177 / CIP 109463 / NCPPB 4357 / Et1/99).